The following is a 276-amino-acid chain: Diaminopimelate epimerase (276 aa).

Substrate is bound by residues Asn13, Gln46, and Asn66. Cys75 (proton donor) is an active-site residue. Residues 76–77, Asn159, Asn192, and 210–211 contribute to the substrate site; these read GN and ER. Cys219 acts as the Proton acceptor in catalysis. 220–221 serves as a coordination point for substrate; it reads GS.

This sequence belongs to the diaminopimelate epimerase family. In terms of assembly, homodimer.

Its subcellular location is the cytoplasm. The enzyme catalyses (2S,6S)-2,6-diaminopimelate = meso-2,6-diaminopimelate. It functions in the pathway amino-acid biosynthesis; L-lysine biosynthesis via DAP pathway; DL-2,6-diaminopimelate from LL-2,6-diaminopimelate: step 1/1. Its function is as follows. Catalyzes the stereoinversion of LL-2,6-diaminopimelate (L,L-DAP) to meso-diaminopimelate (meso-DAP), a precursor of L-lysine and an essential component of the bacterial peptidoglycan. The protein is Diaminopimelate epimerase of Aliivibrio fischeri (strain ATCC 700601 / ES114) (Vibrio fischeri).